Consider the following 2097-residue polypeptide: 1-phosphatidylinositol 3-phosphate 5-kinase (2097 aa).

The disordered stretch occupies residues 1-44 (MATDDKSSPTLDSANDLPRSPASPSHLTHFKPLTPDQDEPPFKS). N-acetylalanine is present on A2. Residues S23 and S48 each carry the phosphoserine; by autocatalysis modification. Residues 56-122 (NKERGEGGQG…AEPACGGHDP (67 aa)) are disordered. The span at 66–81 (EQQSPSSSWASPQIPS) shows a compositional bias: low complexity. The residue at position 88 (S88) is a Phosphoserine. The segment at 158–218 (DSQCKECYDC…ACTYCRKIAL (61 aa)) adopts an FYVE-type zinc-finger fold. Zn(2+)-binding residues include C164, C167, C180, C183, C188, C191, C210, and C213. Phosphoserine occurs at positions 299, 307, and 312. S318 carries the post-translational modification Phosphoserine; by PKB/AKT1 or PKB/AKT2. The residue at position 329 (S329) is a Phosphoserine. In terms of domain architecture, DEP spans 365-440 (HTSGMEFQDH…DEYALYRPLQ (76 aa)). A compositionally biased stretch (polar residues) spans 442–459 (TEFSETPSPDSDSVNSVE). Positions 442-469 (TEFSETPSPDSDSVNSVEGHSEPSWFKD) are disordered. Residues 460–469 (GHSEPSWFKD) are compositionally biased toward basic and acidic residues. S475 is subject to Phosphoserine. Residues 484-505 (GDDNLANSASPSKRTSVSSFQS) form a disordered region. Over residues 488 to 505 (LANSASPSKRTSVSSFQS) the composition is skewed to polar residues. Positions 616 to 868 (MMALLQQLLQ…MICVAYHSQL (253 aa)) are chaperonin-like domain. Disordered regions lie at residues 895–928 (GRGEEGASQEQVSGSSLPQDPECPREALSSEDST), 989–1022 (AVGNEQPETSQQTDEQQDPKSQMKAFRDPLQDDT), 1171–1194 (HSKDASCTSGGKSGNKTESDEERG), and 1511–1555 (FQQE…HNGE). Residues 902–912 (SQEQVSGSSLP) show a composition bias toward polar residues. Positions 1175-1184 (ASCTSGGKSG) are enriched in polar residues. A compositionally biased stretch (basic and acidic residues) spans 1185-1194 (NKTESDEERG). A phosphoserine mark is found at S1543 and S1548. S1668 is subject to Phosphoserine; by autocatalysis. The tract at residues 1697 to 1742 (EGLPANSALDNRPKSSSPIRLPEISGGQTNRTVEAEPQPTKKASGM) is disordered. A Phosphoserine modification is found at S1753. In terms of domain architecture, PIPK spans 1757–2083 (SSQKRETLRG…RFCEAMDKYF (327 aa)). A disordered region spans residues 1781-1800 (GLESQGLEPQDEVDGGDTQK). The catalytic stretch occupies residues 1841–2097 (EEEFIRSLSH…DHWTGLDLNC (257 aa)). A phosphoserine; by autocatalysis mark is found at S1968 and S2052.

As to quaternary structure, component of the PI(3,5)P2 regulatory complex/PAS complex, at least composed of PIKFYVE, FIG4 and VAC14. VAC14 nucleates the assembly of the complex and serves as a scaffold by pentamerizing into a star-shaped structure, which can bind a single copy each of PIKFYVE and FIG4 and coordinates their activities. Interacts (via chaperonin-like domain) with RABEPK; the interaction recruits RABEPK to the endosomal membrane. Interacts with SPAG9. Interacts with EGFR. Mn(2+) is required as a cofactor. Phosphorylated in response to insulin at Ser-318 in a protein kinase B (PKB)-dependent manner. Autophosphorylates which down-regulates lipid product formation. Post-translationally, autophosphorylates which inhibits its own phosphatidylinositol 3-phosphate 5-kinase activity, stimulates FIG4 lipid phosphatase activity and down-regulates lipid product formation. Dephosphorylated by FIG4 in the PI(3,5)P2 regulatory complex, at Ser-48, Ser-1668 and Ser-2052. Phosphorylated in response to insulin at Ser-318 in a protein kinase B (PKB)-dependent manner. In terms of tissue distribution, ubiquitous.

It is found in the endosome membrane. It localises to the early endosome membrane. The protein resides in the cytoplasmic vesicle. Its subcellular location is the phagosome membrane. The protein localises to the late endosome membrane. It carries out the reaction a 1,2-diacyl-sn-glycero-3-phospho-(1D-myo-inositol-3-phosphate) + ATP = a 1,2-diacyl-sn-glycero-3-phospho-(1D-myo-inositol-3,5-bisphosphate) + ADP + H(+). The enzyme catalyses a 1,2-diacyl-sn-glycero-3-phospho-(1D-myo-inositol) + ATP = a 1,2-diacyl-sn-glycero-3-phospho-(1D-myo-inositol-5-phosphate) + ADP + H(+). It catalyses the reaction L-seryl-[protein] + ATP = O-phospho-L-seryl-[protein] + ADP + H(+). Inhibited by apilimod and YM201636. Functionally, dual specificity kinase implicated in myriad essential cellular processes such as maintenance of endomembrane homeostasis, and endocytic-vacuolar pathway, lysosomal trafficking, nuclear transport, stress- or hormone-induced signaling and cell cycle progression. The PI(3,5)P2 regulatory complex regulates both the synthesis and turnover of phosphatidylinositol 3,5-bisphosphate (PtdIns(3,5)P2). Sole enzyme to catalyze the phosphorylation of phosphatidylinositol 3-phosphate on the fifth hydroxyl of the myo-inositol ring, to form (PtdIns(3,5)P2). Also catalyzes the phosphorylation of phosphatidylinositol on the fifth hydroxyl of the myo-inositol ring, to form phosphatidylinositol 5-phosphate (PtdIns(5)P). Has serine-protein kinase activity and is able to autophosphorylate and transphosphorylate. Autophosphorylation inhibits its own phosphatidylinositol 3-phosphate 5-kinase activity, stimulates FIG4 lipid phosphatase activity and down-regulates lipid product formation. Involved in key endosome operations such as fission and fusion in the course of endosomal cargo transport. Required for the maturation of early into late endosomes, phagosomes and lysosomes. Regulates vacuole maturation and nutrient recovery following engulfment of macromolecules, initiates the redistribution of accumulated lysosomal contents back into the endosome network. Critical regulator of the morphology, degradative activity, and protein turnover of the endolysosomal system in macrophages and platelets. In neutrophils, critical to perform chemotaxis, generate ROS, and undertake phagosome fusion with lysosomes. Plays a key role in the processing and presentation of antigens by major histocompatibility complex class II (MHC class II) mediated by CTSS. Regulates melanosome biogenesis by controlling the delivery of proteins from the endosomal compartment to the melanosome. Essential for systemic glucose homeostasis, mediates insulin-induced signals for endosome/actin remodeling in the course of GLUT4 translocation/glucose uptake activation. Supports microtubule-based endosome-to-trans-Golgi network cargo transport, trhough association with SPAG9 and RABEPK. Mediates EGFR trafficking to the nucleus. This chain is 1-phosphatidylinositol 3-phosphate 5-kinase, found in Mus musculus (Mouse).